The primary structure comprises 171 residues: S-ribosylhomocysteine lyase (171 aa).

Fe cation-binding residues include H54, H58, and C128.

Belongs to the LuxS family. Homodimer. Requires Fe cation as cofactor.

It catalyses the reaction S-(5-deoxy-D-ribos-5-yl)-L-homocysteine = (S)-4,5-dihydroxypentane-2,3-dione + L-homocysteine. Involved in the synthesis of autoinducer 2 (AI-2) which is secreted by bacteria and is used to communicate both the cell density and the metabolic potential of the environment. The regulation of gene expression in response to changes in cell density is called quorum sensing. Catalyzes the transformation of S-ribosylhomocysteine (RHC) to homocysteine (HC) and 4,5-dihydroxy-2,3-pentadione (DPD). This chain is S-ribosylhomocysteine lyase, found in Serratia proteamaculans (strain 568).